Reading from the N-terminus, the 1004-residue chain is Copper-transporting ATPase (1004 aa).

Over methionine 1–threonine 262 the chain is Cytoplasmic. 2 HMA domains span residues arginine 2–glutamate 67 and lysine 80–asparagine 146. Residues cysteine 13, cysteine 16, cysteine 91, and cysteine 94 each contribute to the Cu(+) site. A helical membrane pass occupies residues leucine 263–valine 283. At glutamine 284 to aspartate 303 the chain is on the lumenal, vesicle side. The chain crosses the membrane as a helical span at residues isoleucine 304–alanine 324. Over alanine 325–threonine 335 the chain is Cytoplasmic. Residues methionine 336–valine 356 form a helical membrane-spanning segment. Topologically, residues histidine 357–arginine 370 are lumenal, vesicle. The helical transmembrane segment at isoleucine 371–threonine 391 threads the bilayer. Over leucine 392–serine 528 the chain is Cytoplasmic. A helical transmembrane segment spans residues isoleucine 529–leucine 549. Residues asparagine 550–serine 577 lie on the Lumenal, vesicle side of the membrane. The helical transmembrane segment at valine 578–glycine 598 threads the bilayer. Topologically, residues threonine 599–asparagine 901 are cytoplasmic. The 4-aspartylphosphate intermediate role is filled by aspartate 627. Mg(2+) is bound by residues aspartate 838 and aspartate 842. Residues leucine 902 to glycine 924 traverse the membrane as a helical segment. Residues isoleucine 925–leucine 927 are Lumenal, vesicle-facing. Residues proline 928 to leucine 950 traverse the membrane as a helical segment. Over lysine 951–leucine 1004 the chain is Cytoplasmic.

It belongs to the cation transport ATPase (P-type) (TC 3.A.3) family. Type IB subfamily. In terms of assembly, interacts with the copper chaperone ATX1 via the copper anion.

The protein localises to the golgi apparatus. It localises to the trans-Golgi network membrane. The enzyme catalyses Cu(+)(in) + ATP + H2O = Cu(+)(out) + ADP + phosphate + H(+). Functionally, copper-transporting P-type ATPase necessary for the proper uptake of iron. Required for export of copper from cytosol into extracytosolic compartment. Retrieves copper from the metallochaperone ATX1 and incorporates it into trans-Golgi vesicles where they are acquired by the cell-surface iron transporter FET3. Required the production of inositolphosphorylceramide D, probably by delivering copper to a yet to be identified enzyme. This chain is Copper-transporting ATPase, found in Saccharomyces cerevisiae (strain ATCC 204508 / S288c) (Baker's yeast).